A 388-amino-acid chain; its full sequence is Putative nickel insertion protein (388 aa).

The protein belongs to the LarC family.

The protein is Putative nickel insertion protein of Geobacter sulfurreducens (strain ATCC 51573 / DSM 12127 / PCA).